Reading from the N-terminus, the 366-residue chain is Spermidine/putrescine import ATP-binding protein PotA (366 aa).

The ABC transporter domain maps to 8–239 (IRFENVTKQF…PINKFVADFI (232 aa)). 41–48 (GPSGCGKT) provides a ligand contact to ATP.

This sequence belongs to the ABC transporter superfamily. Spermidine/putrescine importer (TC 3.A.1.11.1) family. The complex is composed of two ATP-binding proteins (PotA), two transmembrane proteins (PotB and PotC) and a solute-binding protein (PotD).

It localises to the cell membrane. The catalysed reaction is ATP + H2O + polyamine-[polyamine-binding protein]Side 1 = ADP + phosphate + polyamineSide 2 + [polyamine-binding protein]Side 1.. Its function is as follows. Part of the ABC transporter complex PotABCD involved in spermidine/putrescine import. Responsible for energy coupling to the transport system. The protein is Spermidine/putrescine import ATP-binding protein PotA of Listeria monocytogenes serovar 1/2a (strain ATCC BAA-679 / EGD-e).